The chain runs to 1296 residues: Phosphoribosylformylglycinamidine synthase (1296 aa).

The interval Trp-304–Arg-323 is disordered. ATP is bound by residues Gly-306–Asp-317 and Ala-677. Mg(2+) contacts are provided by Asp-678, Glu-717, Asn-721, and Asp-885. Ser-887 provides a ligand contact to ATP. Positions Pro-1000–Glu-1013 are enriched in basic and acidic residues. The interval Pro-1000 to Asn-1019 is disordered. Positions Val-1043–Gly-1296 constitute a Glutamine amidotransferase type-1 domain. The Nucleophile role is filled by Cys-1136. Active-site residues include His-1261 and Glu-1263.

The protein in the N-terminal section; belongs to the FGAMS family. As to quaternary structure, monomer.

Its subcellular location is the cytoplasm. The catalysed reaction is N(2)-formyl-N(1)-(5-phospho-beta-D-ribosyl)glycinamide + L-glutamine + ATP + H2O = 2-formamido-N(1)-(5-O-phospho-beta-D-ribosyl)acetamidine + L-glutamate + ADP + phosphate + H(+). The protein operates within purine metabolism; IMP biosynthesis via de novo pathway; 5-amino-1-(5-phospho-D-ribosyl)imidazole from N(2)-formyl-N(1)-(5-phospho-D-ribosyl)glycinamide: step 1/2. Its function is as follows. Phosphoribosylformylglycinamidine synthase involved in the purines biosynthetic pathway. Catalyzes the ATP-dependent conversion of formylglycinamide ribonucleotide (FGAR) and glutamine to yield formylglycinamidine ribonucleotide (FGAM) and glutamate. This is Phosphoribosylformylglycinamidine synthase from Yersinia pestis bv. Antiqua (strain Nepal516).